The chain runs to 147 residues: SsrA-binding protein (147 aa).

This sequence belongs to the SmpB family.

The protein localises to the cytoplasm. Its function is as follows. Required for rescue of stalled ribosomes mediated by trans-translation. Binds to transfer-messenger RNA (tmRNA), required for stable association of tmRNA with ribosomes. tmRNA and SmpB together mimic tRNA shape, replacing the anticodon stem-loop with SmpB. tmRNA is encoded by the ssrA gene; the 2 termini fold to resemble tRNA(Ala) and it encodes a 'tag peptide', a short internal open reading frame. During trans-translation Ala-aminoacylated tmRNA acts like a tRNA, entering the A-site of stalled ribosomes, displacing the stalled mRNA. The ribosome then switches to translate the ORF on the tmRNA; the nascent peptide is terminated with the 'tag peptide' encoded by the tmRNA and targeted for degradation. The ribosome is freed to recommence translation, which seems to be the essential function of trans-translation. The protein is SsrA-binding protein of Mycoplasmopsis fermentans (strain ATCC 19989 / NBRC 14854 / NCTC 10117 / PG18) (Mycoplasma fermentans).